We begin with the raw amino-acid sequence, 873 residues long: Zinc finger X-linked protein ZXDB (873 aa).

Disordered regions lie at residues 1 to 23 (MEIP…GCPA), 48 to 120 (RGAQ…GGSR), 138 to 184 (VETV…LSAV), 240 to 259 (EPGV…GALI), and 301 to 330 (AEPA…GPAG). Gly residues-rich tracts occupy residues 14–23 (QGAGGGGCPA) and 85–120 (SGGG…GGSR). Position 89 is an omega-N-methylarginine (R89). Over residues 150 to 165 (VRREEAGAGPRPERRQ) the composition is skewed to basic and acidic residues. The span at 240 to 255 (EPGVAPFPQPQPPPQP) shows a compositional bias: pro residues. Low complexity predominate over residues 316–327 (APAAAAAQSPRG). C2H2-type zinc fingers lie at residues 340–364 (YLCP…LLTH), 373–397 (FKCP…LQSH), 403–427 (FGCP…MKGH), 433–455 (FKCE…QRSH), 462–486 (YQCA…NRAH), 493–517 (FACS…LRSH), 523–547 (FLCD…KRKH), 553–577 (FTCP…SITH), 583–607 (FVCP…SKKH), and 616–641 (SRCP…TKRH). The interval 340–646 (YLCPEAQCGQ…MTKRHNLSQD (307 aa)) is required for interaction with ZXDC. Residues 645–776 (QDLLAQLEAA…DMDDVSAGNV (132 aa)) form a required for transcriptional activation region.

This sequence belongs to the ZXD family. In terms of assembly, self-associates. Interacts with ZXDC and CIITA.

Its subcellular location is the nucleus. In terms of biological role, cooperates with CIITA to promote transcription of MHC class I and MHC class II genes. The polypeptide is Zinc finger X-linked protein ZXDB (Zxdb) (Mus musculus (Mouse)).